The primary structure comprises 610 residues: UvrABC system protein C (610 aa).

The region spanning 13 to 91 (HLPGVYRMYD…IKENQPKYNV (79 aa)) is the GIY-YIG domain. In terms of domain architecture, UVR spans 201–236 (GQVVEHLVQKMENAAQELDFEAAARFRDQIQSVRAV).

The protein belongs to the UvrC family. In terms of assembly, interacts with UvrB in an incision complex.

The protein localises to the cytoplasm. The UvrABC repair system catalyzes the recognition and processing of DNA lesions. UvrC both incises the 5' and 3' sides of the lesion. The N-terminal half is responsible for the 3' incision and the C-terminal half is responsible for the 5' incision. The chain is UvrABC system protein C from Actinobacillus pleuropneumoniae serotype 5b (strain L20).